We begin with the raw amino-acid sequence, 514 residues long: 3-octaprenyl-4-hydroxybenzoate carboxy-lyase (514 aa).

Residue Asn-177 participates in Mn(2+) binding. Residues 180–182, 194–196, and 199–200 contribute to the prenylated FMN site; these read IYR, RWL, and RG. Glu-243 is a binding site for Mn(2+). Asp-314 acts as the Proton donor in catalysis.

Belongs to the UbiD family. As to quaternary structure, homohexamer. Prenylated FMN is required as a cofactor. It depends on Mn(2+) as a cofactor.

The protein resides in the cell membrane. The enzyme catalyses a 4-hydroxy-3-(all-trans-polyprenyl)benzoate + H(+) = a 2-(all-trans-polyprenyl)phenol + CO2. It functions in the pathway cofactor biosynthesis; ubiquinone biosynthesis. Its function is as follows. Catalyzes the decarboxylation of 3-octaprenyl-4-hydroxy benzoate to 2-octaprenylphenol, an intermediate step in ubiquinone biosynthesis. In Bordetella bronchiseptica (strain ATCC BAA-588 / NCTC 13252 / RB50) (Alcaligenes bronchisepticus), this protein is 3-octaprenyl-4-hydroxybenzoate carboxy-lyase.